The chain runs to 201 residues: 3-isopropylmalate dehydratase small subunit (201 aa).

This sequence belongs to the LeuD family. LeuD type 1 subfamily. As to quaternary structure, heterodimer of LeuC and LeuD.

The enzyme catalyses (2R,3S)-3-isopropylmalate = (2S)-2-isopropylmalate. It participates in amino-acid biosynthesis; L-leucine biosynthesis; L-leucine from 3-methyl-2-oxobutanoate: step 2/4. Catalyzes the isomerization between 2-isopropylmalate and 3-isopropylmalate, via the formation of 2-isopropylmaleate. In Escherichia fergusonii (strain ATCC 35469 / DSM 13698 / CCUG 18766 / IAM 14443 / JCM 21226 / LMG 7866 / NBRC 102419 / NCTC 12128 / CDC 0568-73), this protein is 3-isopropylmalate dehydratase small subunit.